A 208-amino-acid chain; its full sequence is Outer-membrane lipoprotein carrier protein (208 aa).

Residues 1–21 (MPAFRYLIVLPLLCWGFASQA) form the signal peptide.

It belongs to the LolA family. As to quaternary structure, monomer.

It localises to the periplasm. Functionally, participates in the translocation of lipoproteins from the inner membrane to the outer membrane. Only forms a complex with a lipoprotein if the residue after the N-terminal Cys is not an aspartate (The Asp acts as a targeting signal to indicate that the lipoprotein should stay in the inner membrane). This Methylococcus capsulatus (strain ATCC 33009 / NCIMB 11132 / Bath) protein is Outer-membrane lipoprotein carrier protein.